A 327-amino-acid chain; its full sequence is Solute-binding protein SPO1773 (327 aa).

Positions 1-26 (MTISFKGLARGVACAALVLAALPAAA) are cleaved as a signal peptide. Residues 39-41 (HTW), Arg150, 170-172 (RIT), and Asp211 each bind 3-hydroxybenzoate.

The protein belongs to the bacterial solute-binding protein 7 family. In terms of assembly, the complex is comprised of an extracytoplasmic solute-binding protein and a heteromeric permease formed by two transmembrane proteins.

It is found in the periplasm. Functionally, solute-binding protein that binds 3,4-dihydroxybenzoate and 3-hydroxybenzoate (in vitro). Probably part of a tripartite ATP-independent periplasmic (TRAP) transport system that mediates solute transport into the cytoplasm. The chain is Solute-binding protein SPO1773 from Ruegeria pomeroyi (strain ATCC 700808 / DSM 15171 / DSS-3) (Silicibacter pomeroyi).